A 279-amino-acid polypeptide reads, in one-letter code: Tryptophan 2,3-dioxygenase (279 aa).

Substrate-binding positions include 48 to 52 (FIIQH), Y110, and R114. H237 contributes to the heme binding site. Residue T251 coordinates substrate.

It belongs to the tryptophan 2,3-dioxygenase family. Homotetramer. Requires heme as cofactor.

The enzyme catalyses L-tryptophan + O2 = N-formyl-L-kynurenine. It functions in the pathway amino-acid degradation; L-tryptophan degradation via kynurenine pathway; L-kynurenine from L-tryptophan: step 1/2. Functionally, heme-dependent dioxygenase that catalyzes the oxidative cleavage of the L-tryptophan (L-Trp) pyrrole ring and converts L-tryptophan to N-formyl-L-kynurenine. Catalyzes the oxidative cleavage of the indole moiety. This is Tryptophan 2,3-dioxygenase from Ruegeria sp. (strain TM1040) (Silicibacter sp.).